Reading from the N-terminus, the 396-residue chain is Large ribosomal subunit protein uL4A (396 aa).

Residues 352–373 (KAKEKKPDDGKPKAKKPLDAKT) are compositionally biased toward basic and acidic residues. The disordered stretch occupies residues 352–374 (KAKEKKPDDGKPKAKKPLDAKTK).

Belongs to the universal ribosomal protein uL4 family. As to quaternary structure, component of the large ribosomal subunit.

The protein localises to the cytoplasm. Its function is as follows. Component of the large ribosomal subunit. The ribosome is a large ribonucleoprotein complex responsible for the synthesis of proteins in the cell. This is Large ribosomal subunit protein uL4A (rpl4-a) from Xenopus laevis (African clawed frog).